The chain runs to 73 residues: DNA-directed RNA polymerase subunit omega (73 aa).

This sequence belongs to the RNA polymerase subunit omega family. In terms of assembly, the RNAP catalytic core consists of 2 alpha, 1 beta, 1 beta' and 1 omega subunit. When a sigma factor is associated with the core the holoenzyme is formed, which can initiate transcription.

It carries out the reaction RNA(n) + a ribonucleoside 5'-triphosphate = RNA(n+1) + diphosphate. Its function is as follows. Promotes RNA polymerase assembly. Latches the N- and C-terminal regions of the beta' subunit thereby facilitating its interaction with the beta and alpha subunits. The sequence is that of DNA-directed RNA polymerase subunit omega from Oleidesulfovibrio alaskensis (strain ATCC BAA-1058 / DSM 17464 / G20) (Desulfovibrio alaskensis).